We begin with the raw amino-acid sequence, 761 residues long: 5-methyltetrahydropteroyltriglutamate--homocysteine methyltransferase (761 aa).

5-methyltetrahydropteroyltri-L-glutamate is bound by residues 16-19 and Lys116; that span reads RELK. L-homocysteine-binding positions include 437–439 and Glu490; that span reads IGS. L-methionine is bound by residues 437–439 and Glu490; that span reads IGS. Residues 521-522 and Trp567 each bind 5-methyltetrahydropteroyltri-L-glutamate; that span reads RC. Asp605 lines the L-homocysteine pocket. Asp605 serves as a coordination point for L-methionine. Glu611 lines the 5-methyltetrahydropteroyltri-L-glutamate pocket. The Zn(2+) site is built by His647, Cys649, and Glu671. His700 acts as the Proton donor in catalysis. Cys732 contributes to the Zn(2+) binding site.

This sequence belongs to the vitamin-B12 independent methionine synthase family. It depends on Zn(2+) as a cofactor.

The catalysed reaction is 5-methyltetrahydropteroyltri-L-glutamate + L-homocysteine = tetrahydropteroyltri-L-glutamate + L-methionine. It participates in amino-acid biosynthesis; L-methionine biosynthesis via de novo pathway; L-methionine from L-homocysteine (MetE route): step 1/1. Its function is as follows. Catalyzes the transfer of a methyl group from 5-methyltetrahydrofolate to homocysteine resulting in methionine formation. The polypeptide is 5-methyltetrahydropteroyltriglutamate--homocysteine methyltransferase (Chromohalobacter salexigens (strain ATCC BAA-138 / DSM 3043 / CIP 106854 / NCIMB 13768 / 1H11)).